We begin with the raw amino-acid sequence, 626 residues long: Hormonally up-regulated neu tumor-associated kinase homolog B (626 aa).

Residues 1–2 and Lys-17 contribute to the ATP site; that span reads KV. One can recognise a Protein kinase domain in the interval 1–246; the sequence is KVREGLHVGT…IQQALANRWL (246 aa). Asp-112 functions as the Proton acceptor in the catalytic mechanism. A compositionally biased stretch (basic and acidic residues) spans 336–357; that stretch reads KYKMNKNSYEERRSKDLEKRGE. Disordered regions lie at residues 336–407, 477–574, and 590–615; these read KYKM…ESFG, VNRE…RSRG, and QVVS…PGYA. The span at 374-390 shows a compositional bias: polar residues; that stretch reads SHRQSTCLTPQGHSSSK. Residues 392 to 405 show a composition bias toward basic and acidic residues; the sequence is PIKERRSSKSERES. A compositionally biased stretch (polar residues) spans 518–532; it reads DNTSPLKGHSNQASF. Residues 539 to 555 are compositionally biased toward low complexity; sequence SPSSPESMSPTSPHSPS. Over residues 556 to 566 the composition is skewed to polar residues; sequence CNNNISGNLGS.

Belongs to the protein kinase superfamily. CAMK Ser/Thr protein kinase family. SNF1 subfamily. In terms of tissue distribution, in the egg, expressed predominantly in the animal hemisphere. This pattern of expression persists throughout the cleavage and blastula stages. At the gastrula stage, expression is restricted to the ectoderm. In later-stage embryos, expressed over the entire embryonic surface including the open neural plate at stage 15 and the neural tube at stage 22. In tadpoles, strongly expressed in the neural tube, motor neurons, brain regions and sensory organs (otic vesicle and eye). Also expressed in the perisomitic mesoderm, brachial arches and embryonic epidermis of tadpoles.

It catalyses the reaction L-seryl-[protein] + ATP = O-phospho-L-seryl-[protein] + ADP + H(+). The enzyme catalyses L-threonyl-[protein] + ATP = O-phospho-L-threonyl-[protein] + ADP + H(+). The protein is Hormonally up-regulated neu tumor-associated kinase homolog B (hunk-b) of Xenopus laevis (African clawed frog).